We begin with the raw amino-acid sequence, 428 residues long: Serine--tRNA ligase (428 aa).

231–233 (TAE) serves as a coordination point for L-serine. An ATP-binding site is contributed by 262-264 (RSE). Glutamate 285 is a binding site for L-serine. An ATP-binding site is contributed by 349 to 352 (EISS). Residue serine 385 coordinates L-serine.

Belongs to the class-II aminoacyl-tRNA synthetase family. Type-1 seryl-tRNA synthetase subfamily. In terms of assembly, homodimer. The tRNA molecule binds across the dimer.

Its subcellular location is the cytoplasm. The enzyme catalyses tRNA(Ser) + L-serine + ATP = L-seryl-tRNA(Ser) + AMP + diphosphate + H(+). The catalysed reaction is tRNA(Sec) + L-serine + ATP = L-seryl-tRNA(Sec) + AMP + diphosphate + H(+). It participates in aminoacyl-tRNA biosynthesis; selenocysteinyl-tRNA(Sec) biosynthesis; L-seryl-tRNA(Sec) from L-serine and tRNA(Sec): step 1/1. In terms of biological role, catalyzes the attachment of serine to tRNA(Ser). Is also able to aminoacylate tRNA(Sec) with serine, to form the misacylated tRNA L-seryl-tRNA(Sec), which will be further converted into selenocysteinyl-tRNA(Sec). The protein is Serine--tRNA ligase of Staphylococcus aureus (strain USA300).